A 229-amino-acid polypeptide reads, in one-letter code: Predicted GPI-anchored protein 19 (229 aa).

Residues 1–20 (MFSTTSIVLWFTILLPVTLP) form the signal peptide. The interval 63–92 (DNEQVLRKSKKKKKTTSTGTPGNENTTDFA) is disordered. The segment covering 81-92 (GTPGNENTTDFA) has biased composition (polar residues). Residues Asn87, Asn184, and Asn189 are each glycosylated (N-linked (GlcNAc...) asparagine). The GPI-anchor amidated glycine moiety is linked to residue Gly208. Positions 209-229 (FGSLIPYNSFYLYILLFCIIF) are cleaved as a propeptide — removed in mature form.

The protein resides in the cell membrane. Predicted GPI-anchored protein which may have a role during host infection. The sequence is that of Predicted GPI-anchored protein 19 (PGA19) from Candida albicans (strain SC5314 / ATCC MYA-2876) (Yeast).